We begin with the raw amino-acid sequence, 116 residues long: Ribonuclease P protein component (116 aa).

Belongs to the RnpA family. In terms of assembly, consists of a catalytic RNA component (M1 or rnpB) and a protein subunit.

The enzyme catalyses Endonucleolytic cleavage of RNA, removing 5'-extranucleotides from tRNA precursor.. Functionally, RNaseP catalyzes the removal of the 5'-leader sequence from pre-tRNA to produce the mature 5'-terminus. It can also cleave other RNA substrates such as 4.5S RNA. The protein component plays an auxiliary but essential role in vivo by binding to the 5'-leader sequence and broadening the substrate specificity of the ribozyme. The chain is Ribonuclease P protein component from Citrifermentans bemidjiense (strain ATCC BAA-1014 / DSM 16622 / JCM 12645 / Bem) (Geobacter bemidjiensis).